The following is a 729-amino-acid chain: MLYQGETLQLHWLDNGIAELVFNAPGSVNKLDTRTVASLGEALAVLEKQTELKGLLLRSTKAAFIVGADITEFLSLFAAPAEKLQEWLNFANAIFNRLEDLPVPTISAINGYALGGGCECILATDFRVASPDARIGLPETKLGIMPGFGGSVRLPRLLGNDSALEIIAAGKDVSAKDALKVGLVDAVVAPEKLVEAALKMLQQAIEGKLDWRAYRQPKLEPLKLSPIEAAMSFTTAKGMVMQTAGKHYPAPMTAVKTIEAAARLGRDEALKLETASFVPLARSKEARALVGIFLNDQFVKGQAKKLAKGIEAPKQAAVLGAGIMGGGIAYQSALKGVPVVMKDISDKSLTLGMNEAAKLLNKQLERGKLDGMKMAQVLSTIQPTLDYAGIERAQVIVEAVVENPKIKAAVLSEVEGLIGENTVLASNTSTIPINHLAKSLKRPQNFCGMHFFNPVHRMPLVEIIRGEQTSDSTIAAVVAYASRMGKTPIVVNDCPGFFVNRVLFPYFAGFSMLLRDGADFRQIDKVMEKQFGWPMGPAYLLDVVGIDTAHHAQAVMAAGFPERMGKDYRDAIDVMFDNQRFGQKNQLGFYRYSQDNKGKPRKDNDEQTDVLLAEVSQPRQTISDEEIIARMMIPMINEVVRCLEENIIASPAEADMALVYGIGFPPFHGGAFRYLDTLGTANYVELAQRYAHLGALYQVPAGLRAKAEHNESYYPVAAPLSDVSTGQPA.

Residues 1–189 (MLYQGETLQL…KVGLVDAVVA (189 aa)) form an enoyl-CoA hydratase/isomerase region. Asp296 contacts substrate. The segment at 311-729 (EAPKQAAVLG…LSDVSTGQPA (419 aa)) is 3-hydroxyacyl-CoA dehydrogenase. NAD(+)-binding positions include Met324, Asp343, 400–402 (VVE), Lys407, and Ser429. Catalysis depends on His450, which acts as the For 3-hydroxyacyl-CoA dehydrogenase activity. Asn453 provides a ligand contact to NAD(+). Substrate contacts are provided by Asn500 and Tyr660.

This sequence in the N-terminal section; belongs to the enoyl-CoA hydratase/isomerase family. It in the C-terminal section; belongs to the 3-hydroxyacyl-CoA dehydrogenase family. As to quaternary structure, heterotetramer of two alpha chains (FadB) and two beta chains (FadA).

It carries out the reaction a (3S)-3-hydroxyacyl-CoA + NAD(+) = a 3-oxoacyl-CoA + NADH + H(+). The catalysed reaction is a (3S)-3-hydroxyacyl-CoA = a (2E)-enoyl-CoA + H2O. The enzyme catalyses a 4-saturated-(3S)-3-hydroxyacyl-CoA = a (3E)-enoyl-CoA + H2O. It catalyses the reaction (3S)-3-hydroxybutanoyl-CoA = (3R)-3-hydroxybutanoyl-CoA. It carries out the reaction a (3Z)-enoyl-CoA = a 4-saturated (2E)-enoyl-CoA. The catalysed reaction is a (3E)-enoyl-CoA = a 4-saturated (2E)-enoyl-CoA. It functions in the pathway lipid metabolism; fatty acid beta-oxidation. Its function is as follows. Involved in the aerobic and anaerobic degradation of long-chain fatty acids via beta-oxidation cycle. Catalyzes the formation of 3-oxoacyl-CoA from enoyl-CoA via L-3-hydroxyacyl-CoA. It can also use D-3-hydroxyacyl-CoA and cis-3-enoyl-CoA as substrate. This is Fatty acid oxidation complex subunit alpha from Serratia proteamaculans (strain 568).